The chain runs to 459 residues: Ribulose bisphosphate carboxylase large chain (459 aa).

An N6,N6,N6-trimethyllysine modification is found at lysine 4. Substrate contacts are provided by asparagine 113 and threonine 163. Lysine 165 acts as the Proton acceptor in catalysis. Residue lysine 167 participates in substrate binding. Positions 191, 193, and 194 each coordinate Mg(2+). Lysine 191 carries the N6-carboxylysine modification. Histidine 284 functions as the Proton acceptor in the catalytic mechanism. Substrate-binding residues include arginine 285, histidine 317, and serine 369.

This sequence belongs to the RuBisCO large chain family. Type I subfamily. Heterohexadecamer of 8 large chains and 8 small chains; disulfide-linked. The disulfide link is formed within the large subunit homodimers. Mg(2+) serves as cofactor. The disulfide bond which can form in the large chain dimeric partners within the hexadecamer appears to be associated with oxidative stress and protein turnover.

Its subcellular location is the plastid. The protein resides in the chloroplast. The enzyme catalyses 2 (2R)-3-phosphoglycerate + 2 H(+) = D-ribulose 1,5-bisphosphate + CO2 + H2O. The catalysed reaction is D-ribulose 1,5-bisphosphate + O2 = 2-phosphoglycolate + (2R)-3-phosphoglycerate + 2 H(+). Its function is as follows. RuBisCO catalyzes two reactions: the carboxylation of D-ribulose 1,5-bisphosphate, the primary event in carbon dioxide fixation, as well as the oxidative fragmentation of the pentose substrate in the photorespiration process. Both reactions occur simultaneously and in competition at the same active site. In Nyssa ogeche (Ogeechee tupelo), this protein is Ribulose bisphosphate carboxylase large chain.